The following is a 958-amino-acid chain: Translation initiation factor IF-2 (958 aa).

2 disordered regions span residues 67–95 (APAASRPAAPAPGPAAPKAPAPAPAAPAP) and 111–355 (PAPA…VPRG). The segment covering 75 to 95 (APAPGPAAPKAPAPAPAAPAP) has biased composition (pro residues). The segment covering 140-161 (PAPARQGGQAPRPGGPRPGNNP) has biased composition (low complexity). The span at 195–206 (RGERRNDGERPG) shows a compositional bias: basic and acidic residues. A compositionally biased stretch (low complexity) spans 209–221 (RPAAGAGGPRPAA). The segment covering 228 to 241 (PGAPRPGAPRPGAP) has biased composition (pro residues). A compositionally biased stretch (gly residues) spans 268–325 (GGAGRPGGAGRPGGGPGRPGGAPGAGTGGGAPAGGGFGKGGRGRGGTQGAFGKGGAGR). Basic residues predominate over residues 326–335 (GKQRKSKRAK). A tr-type G domain is found at 450–621 (ARAPVVTVMG…AVLLTADAAL (172 aa)). The tract at residues 459-466 (GHVDHGKT) is G1. 459–466 (GHVDHGKT) is a GTP binding site. Residues 484 to 488 (GITQH) form a G2 region. A G3 region spans residues 509–512 (DTPG). GTP-binding positions include 509 to 513 (DTPGH) and 563 to 566 (NKID). A G4 region spans residues 563–566 (NKID). A G5 region spans residues 599–601 (SAR).

This sequence belongs to the TRAFAC class translation factor GTPase superfamily. Classic translation factor GTPase family. IF-2 subfamily.

The protein localises to the cytoplasm. In terms of biological role, one of the essential components for the initiation of protein synthesis. Protects formylmethionyl-tRNA from spontaneous hydrolysis and promotes its binding to the 30S ribosomal subunits. Also involved in the hydrolysis of GTP during the formation of the 70S ribosomal complex. This chain is Translation initiation factor IF-2, found in Paenarthrobacter aurescens (strain TC1).